The primary structure comprises 250 residues: Cytochrome c oxidase subunit 2 (250 aa).

Topologically, residues 1–39 (MFFLINKLVMNFDAPSPWGIYFQDSATPQMEGLNELHDN) are mitochondrial intermembrane. Residues 40-60 (IMYYLVVILFAVGWILLSIVI) traverse the membrane as a helical segment. Residues 61–81 (NYVSTKSPISHKYLNHGTLIE) lie on the Mitochondrial matrix side of the membrane. A helical transmembrane segment spans residues 82 to 104 (LIWTITPAVILILIAFPSFKLLY). At 105-250 (LMDEVSDPSM…EKFLIWLKEQ (146 aa)) the chain is on the mitochondrial intermembrane side. The Cu cation site is built by His-185, Cys-220, Glu-222, Cys-224, His-228, and Met-231. A Mg(2+)-binding site is contributed by Glu-222.

It belongs to the cytochrome c oxidase subunit 2 family. As to quaternary structure, component of the cytochrome c oxidase (complex IV, CIV), a multisubunit enzyme composed of a catalytic core of 3 subunits and several supernumerary subunits. The complex exists as a monomer or a dimer and forms supercomplexes (SCs) in the inner mitochondrial membrane with ubiquinol-cytochrome c oxidoreductase (cytochrome b-c1 complex, complex III, CIII). Cu cation is required as a cofactor.

It is found in the mitochondrion inner membrane. The enzyme catalyses 4 Fe(II)-[cytochrome c] + O2 + 8 H(+)(in) = 4 Fe(III)-[cytochrome c] + 2 H2O + 4 H(+)(out). In terms of biological role, component of the cytochrome c oxidase, the last enzyme in the mitochondrial electron transport chain which drives oxidative phosphorylation. The respiratory chain contains 3 multisubunit complexes succinate dehydrogenase (complex II, CII), ubiquinol-cytochrome c oxidoreductase (cytochrome b-c1 complex, complex III, CIII) and cytochrome c oxidase (complex IV, CIV), that cooperate to transfer electrons derived from NADH and succinate to molecular oxygen, creating an electrochemical gradient over the inner membrane that drives transmembrane transport and the ATP synthase. Cytochrome c oxidase is the component of the respiratory chain that catalyzes the reduction of oxygen to water. Electrons originating from reduced cytochrome c in the intermembrane space (IMS) are transferred via the dinuclear copper A center (CU(A)) of subunit 2 and heme A of subunit 1 to the active site in subunit 1, a binuclear center (BNC) formed by heme A3 and copper B (CU(B)). The BNC reduces molecular oxygen to 2 water molecules using 4 electrons from cytochrome c in the IMS and 4 protons from the mitochondrial matrix. This Podospora anserina (strain S / ATCC MYA-4624 / DSM 980 / FGSC 10383) (Pleurage anserina) protein is Cytochrome c oxidase subunit 2 (COII).